The chain runs to 346 residues: tRNA N6-adenosine threonylcarbamoyltransferase (346 aa).

Positions 109, 113, and 135 each coordinate Fe cation. Substrate is bound by residues 135 to 139 (YVSGG), Asp167, Gly180, Glu184, and Asn263. Asp291 contacts Fe cation.

The protein belongs to the KAE1 / TsaD family. As to quaternary structure, monomer. Component of the KEOPS complex that consists of Kae1, Bud32, Cgi121 and Pcc1; the whole complex dimerizes. It depends on Fe(2+) as a cofactor.

Its subcellular location is the cytoplasm. It catalyses the reaction L-threonylcarbamoyladenylate + adenosine(37) in tRNA = N(6)-L-threonylcarbamoyladenosine(37) in tRNA + AMP + H(+). In terms of biological role, required for the formation of a threonylcarbamoyl group on adenosine at position 37 (t(6)A37) in tRNAs that read codons beginning with adenine. Is a component of the KEOPS complex that is probably involved in the transfer of the threonylcarbamoyl moiety of threonylcarbamoyl-AMP (TC-AMP) to the N6 group of A37. Kae1 likely plays a direct catalytic role in this reaction, but requires other protein(s) of the complex to fulfill this activity. This Methanopyrus kandleri (strain AV19 / DSM 6324 / JCM 9639 / NBRC 100938) protein is tRNA N6-adenosine threonylcarbamoyltransferase.